Reading from the N-terminus, the 175-residue chain is Acireductone dioxygenase (175 aa).

Fe(2+) is bound by residues H81, H83, E87, and H126. Residues H81, H83, E87, and H126 each contribute to the Ni(2+) site.

The protein belongs to the acireductone dioxygenase (ARD) family. Requires Fe(2+) as cofactor. It depends on Ni(2+) as a cofactor.

The protein localises to the cytoplasm. Its subcellular location is the nucleus. The catalysed reaction is 1,2-dihydroxy-5-(methylsulfanyl)pent-1-en-3-one + O2 = 4-methylsulfanyl-2-oxobutanoate + formate + 2 H(+). The enzyme catalyses 1,2-dihydroxy-5-(methylsulfanyl)pent-1-en-3-one + O2 = 3-(methylsulfanyl)propanoate + CO + formate + 2 H(+). The protein operates within amino-acid biosynthesis; L-methionine biosynthesis via salvage pathway; L-methionine from S-methyl-5-thio-alpha-D-ribose 1-phosphate: step 5/6. Its function is as follows. Catalyzes 2 different reactions between oxygen and the acireductone 1,2-dihydroxy-3-keto-5-methylthiopentene (DHK-MTPene) depending upon the metal bound in the active site. Fe-containing acireductone dioxygenase (Fe-ARD) produces formate and 2-keto-4-methylthiobutyrate (KMTB), the alpha-ketoacid precursor of methionine in the methionine recycle pathway. Ni-containing acireductone dioxygenase (Ni-ARD) produces methylthiopropionate, carbon monoxide and formate, and does not lie on the methionine recycle pathway. This is Acireductone dioxygenase from Phaeosphaeria nodorum (strain SN15 / ATCC MYA-4574 / FGSC 10173) (Glume blotch fungus).